The chain runs to 254 residues: D-aminoacyl-tRNA deacylase (254 aa).

The segment at 61 to 82 (KPTLTVHTPGNLTDDNSHGGNP) is disordered. Over residues 65–74 (TVHTPGNLTD) the composition is skewed to polar residues.

This sequence belongs to the DtdA deacylase family. As to quaternary structure, monomer. Requires Zn(2+) as cofactor.

It catalyses the reaction a D-aminoacyl-tRNA + H2O = a tRNA + a D-alpha-amino acid + H(+). It carries out the reaction glycyl-tRNA(Ala) + H2O = tRNA(Ala) + glycine + H(+). In terms of biological role, D-aminoacyl-tRNA deacylase with broad substrate specificity. By recycling D-aminoacyl-tRNA to D-amino acids and free tRNA molecules, this enzyme counteracts the toxicity associated with the formation of D-aminoacyl-tRNA entities in vivo. The polypeptide is D-aminoacyl-tRNA deacylase (Methanococcus maripaludis (strain DSM 14266 / JCM 13030 / NBRC 101832 / S2 / LL)).